Here is a 1794-residue protein sequence, read N- to C-terminus: Non-reducing polyketide synthase nscA (1794 aa).

An N-terminal acylcarrier protein transacylase domain (SAT) region spans residues 19–256; that stretch reads DLKDLFRRLH…PLPVYDGLCH (238 aa). Residues 389-822 form the Ketosynthase family 3 (KS3) domain; sequence ASKLAIVGMA…GGNTTVLLED (434 aa). The span at 428–440 shows a compositional bias: basic and acidic residues; sequence DRFDLNTHYDPTG. The tract at residues 428 to 448 is disordered; sequence DRFDLNTHYDPTGKTENATQT. Catalysis depends on for beta-ketoacyl synthase activity residues C562, H697, and H740. A malonyl-CoA:ACP transacylase (MAT) domain region spans residues 927-1230; the sequence is TFTGQGAYYS…SVISSCRRNE (304 aa). The product template (PT) domain stretch occupies residues 1314 to 1633; sequence TSLVHQITTE…RLLMDRFFSP (320 aa). The tract at residues 1318–1454 is N-terminal hotdog fold; that stretch reads HQITTETVEA…CVVRFEDPAA (137 aa). Positions 1318-1628 constitute a PKS/mFAS DH domain; it reads HQITTETVEA…FRRVPRLLMD (311 aa). H1350 functions as the Proton acceptor; for dehydratase activity in the catalytic mechanism. Residues 1482–1628 are C-terminal hotdog fold; the sequence is ASKLSKPLAY…FRRVPRLLMD (147 aa). Residue D1539 is the Proton donor; for dehydratase activity of the active site. The disordered stretch occupies residues 1637–1719; the sequence is SHTEKQLQET…ATSDRGDSTD (83 aa). The segment covering 1644–1655 has biased composition (polar residues); that stretch reads QETAPSATNVKK. In terms of domain architecture, Carrier spans 1717–1794; sequence STDAGVVGQC…EMTAWLEEYC (78 aa). O-(pantetheine 4'-phosphoryl)serine is present on S1754.

Pantetheine 4'-phosphate serves as cofactor.

It functions in the pathway secondary metabolite biosynthesis. Functionally, non-reducing polyketide synthase; part of the gene cluster that mediates the biosynthesis of neosartoricin, a prenylated anthracenone that exhibits T-cell antiproliferative activity, suggestive of a physiological role as an immunosuppressive agent. The non-reducing polyketide synthase nscA probably synthesizes and cyclizes the decaketide backbone. The hydrolase nscB then mediates the product release through hydrolysis followed by spontaneous decarboxylation. The prenyltransferase nscD catalyzes the addition of the dimethylallyl group to the aromatic C5. The FAD-dependent monooxygenase nscC is then responsible for the stereospecific hydroxylation at C2. There is no gene encoding O-acetyltransferase in the nsc gene cluster; thus, the last step of 2-O-acetylation leading to neosartoricin may be catalyzed by an unidentified O-acetyltransferase. The protein is Non-reducing polyketide synthase nscA of Aspergillus fumigatus (strain ATCC MYA-4609 / CBS 101355 / FGSC A1100 / Af293) (Neosartorya fumigata).